Consider the following 1019-residue polypeptide: Vacuolar membrane protease (1019 aa).

Topologically, residues 1 to 69 (MFLEINFYST…DRIPTVVGFR (69 aa)) are cytoplasmic. The helical transmembrane segment at 70-90 (VIPTTVLVLLTYLTIFTLVIV) threads the bilayer. Topologically, residues 91 to 404 (TDWLPEPPKN…AELVIFYLND (314 aa)) are vacuolar. Asn-158 is a glycosylation site (N-linked (GlcNAc...) asparagine). Residues His-195 and Asp-207 each coordinate Zn(2+). Glu-239 serves as the catalytic Proton acceptor. Glu-240 contacts Zn(2+). Asn-256 is a glycosylation site (N-linked (GlcNAc...) asparagine). 2 residues coordinate Zn(2+): Glu-265 and His-341. Residues 405–425 (LLIYNVVSLVVGPISLIFFVV) form a helical membrane-spanning segment. Over 426–466 (CEYVLRNERARQPNGHPVSRPSVLEWLKQRSWLRALWRRSK) the chain is Cytoplasmic. The helical transmembrane segment at 467–487 (FWIALVITIALQALLVWGYLA) threads the bilayer. Topologically, residues 488-497 (FNSFTVYSSP) are vacuolar. The helical transmembrane segment at 498-518 (YLVLISFFSLAYLSLVIPLTF) threads the bilayer. At 519–539 (TFNQTQSPTAKYIAPEREKHT) the chain is on the cytoplasmic side. Residues 540–560 (LLIQVYIFTWILLLFSTIAVA) form a helical membrane-spanning segment. At 561–565 (RAQVG) the chain is on the vacuolar side. The chain crosses the membrane as a helical span at residues 566-586 (GLYFVTAWNTGVWIACLLAAV). At 587–651 (EGMMLPVPQG…ASLRKPQEGG (65 aa)) the chain is on the cytoplasmic side. Positions 603-634 (HSAHHHHHHEHEEDQDADDDDREQRQPPTEAT) are disordered. The chain crosses the membrane as a helical span at residues 652-672 (VVGWWIVHLLLTIPAPVLLIA). The Vacuolar portion of the chain corresponds to 673–692 (QMGSLLLDSLPQTLADGSPA). The chain crosses the membrane as a helical span at residues 693–713 (YVVYAAASLTAVLLAVPLTPF). Residues 714–719 (SGKLHR) lie on the Cytoplasmic side of the membrane. The helical transmembrane segment at 720 to 740 (GLFFLFFLSFLIVTAYLWLAF) threads the bilayer. Topologically, residues 741-1019 (PFSSADPLKV…LVEAWSPFSV (279 aa)) are vacuolar. Asn-774 carries N-linked (GlcNAc...) asparagine glycosylation.

The protein belongs to the peptidase M28 family. Requires Zn(2+) as cofactor.

The protein localises to the vacuole membrane. Functionally, may be involved in vacuolar sorting and osmoregulation. This is Vacuolar membrane protease from Laccaria bicolor (strain S238N-H82 / ATCC MYA-4686) (Bicoloured deceiver).